The following is a 487-amino-acid chain: Aspartyl/glutamyl-tRNA(Asn/Gln) amidotransferase subunit B (487 aa).

It belongs to the GatB/GatE family. GatB subfamily. As to quaternary structure, heterotrimer of A, B and C subunits.

It carries out the reaction L-glutamyl-tRNA(Gln) + L-glutamine + ATP + H2O = L-glutaminyl-tRNA(Gln) + L-glutamate + ADP + phosphate + H(+). It catalyses the reaction L-aspartyl-tRNA(Asn) + L-glutamine + ATP + H2O = L-asparaginyl-tRNA(Asn) + L-glutamate + ADP + phosphate + 2 H(+). Functionally, allows the formation of correctly charged Asn-tRNA(Asn) or Gln-tRNA(Gln) through the transamidation of misacylated Asp-tRNA(Asn) or Glu-tRNA(Gln) in organisms which lack either or both of asparaginyl-tRNA or glutaminyl-tRNA synthetases. The reaction takes place in the presence of glutamine and ATP through an activated phospho-Asp-tRNA(Asn) or phospho-Glu-tRNA(Gln). The chain is Aspartyl/glutamyl-tRNA(Asn/Gln) amidotransferase subunit B from Roseiflexus sp. (strain RS-1).